Here is a 1029-residue protein sequence, read N- to C-terminus: Error-prone DNA polymerase (1029 aa).

Belongs to the DNA polymerase type-C family. DnaE2 subfamily.

It is found in the cytoplasm. The catalysed reaction is DNA(n) + a 2'-deoxyribonucleoside 5'-triphosphate = DNA(n+1) + diphosphate. DNA polymerase involved in damage-induced mutagenesis and translesion synthesis (TLS). It is not the major replicative DNA polymerase. This chain is Error-prone DNA polymerase, found in Saccharophagus degradans (strain 2-40 / ATCC 43961 / DSM 17024).